The chain runs to 331 residues: Ferredoxin--NADP reductase 2 (331 aa).

Glutamate 37, glutamine 45, tyrosine 50, valine 90, phenylalanine 124, aspartate 286, and threonine 327 together coordinate FAD.

It belongs to the ferredoxin--NADP reductase type 2 family. As to quaternary structure, homodimer. It depends on FAD as a cofactor.

The catalysed reaction is 2 reduced [2Fe-2S]-[ferredoxin] + NADP(+) + H(+) = 2 oxidized [2Fe-2S]-[ferredoxin] + NADPH. The sequence is that of Ferredoxin--NADP reductase 2 from Listeria monocytogenes serotype 4b (strain F2365).